Reading from the N-terminus, the 70-residue chain is NADH dehydrogenase [ubiquinone] 1 alpha subcomplex subunit 1 (70 aa).

The helical transmembrane segment at 1 to 21 (MWFEILPGLSVMGVCLLIPGL) threads the bilayer.

The protein belongs to the complex I NDUFA1 subunit family. Complex I is composed of 45 different subunits.

The protein localises to the mitochondrion inner membrane. Its function is as follows. Accessory subunit of the mitochondrial membrane respiratory chain NADH dehydrogenase (Complex I), that is believed not to be involved in catalysis. Complex I functions in the transfer of electrons from NADH to the respiratory chain. The immediate electron acceptor for the enzyme is believed to be ubiquinone. In Gorilla gorilla gorilla (Western lowland gorilla), this protein is NADH dehydrogenase [ubiquinone] 1 alpha subcomplex subunit 1 (NDUFA1).